We begin with the raw amino-acid sequence, 638 residues long: Exotoxin A (638 aa).

Residues 1–25 form the signal peptide; that stretch reads MHLTPHWIPLVASLGLLAGGSFASA. The segment at 26–277 is domain Ia (required for target cell recognition); the sequence is AEEAFDLWNE…VISHRLHFPE (252 aa). The segment at 278 to 389 is II (required for translocation in target cell cytoplasm); it reads GGSLAALTAH…TGNDEAGAAS (112 aa). Cys-290 and Cys-312 are joined by a disulfide. Residues 390-429 form a domain Ib region; it reads ADVVSLTCPVAAGECAGPADSGDALLERNYPTGAEFLGDG. The tract at residues 430–638 is III (required for ADP-ribosyl activity); the sequence is GDISFSTRGT…PGKPPREDLK (209 aa). Residues 465–467, Ser-474, 479–485, and Glu-578 each bind NAD(+); these read HGT and GVRARSQ. The active site involves Glu-578. The segment at 596–638 is disordered; the sequence is IPTDPRNVGGDLDPSSIPDKEQAISALPDYASQPGKPPREDLK.

In terms of processing, the 8 cysteines participate in intrachain disulfide bonds.

It catalyses the reaction diphthamide-[translation elongation factor 2] + NAD(+) = N-(ADP-D-ribosyl)diphthamide-[translation elongation factor 2] + nicotinamide + H(+). With respect to regulation, inhibited by 1,8-naphthalimide (NAP) as well as a number of poly(ADP-ribose) polymerase inhibitors and other compounds. An NAD-dependent ADP-ribosyltransferase (ADPRT). Catalyzes the transfer of the ADP ribosyl moiety of oxidized NAD (NAD(+)) onto eukaryotic elongation factor 2 (eEF-2) thus arresting protein synthesis. Has an LD(50) of 65 ng/ml against the human lung epithelial cell line C38. The polypeptide is Exotoxin A (Pseudomonas aeruginosa (strain ATCC 15692 / DSM 22644 / CIP 104116 / JCM 14847 / LMG 12228 / 1C / PRS 101 / PAO1)).